The sequence spans 318 residues: tRNA pseudouridine synthase B (318 aa).

Catalysis depends on Asp-47, which acts as the Nucleophile.

It belongs to the pseudouridine synthase TruB family. Type 1 subfamily.

It catalyses the reaction uridine(55) in tRNA = pseudouridine(55) in tRNA. Its function is as follows. Responsible for synthesis of pseudouridine from uracil-55 in the psi GC loop of transfer RNAs. This Shewanella putrefaciens (strain CN-32 / ATCC BAA-453) protein is tRNA pseudouridine synthase B.